We begin with the raw amino-acid sequence, 245 residues long: AP-1-like transcription factor YAP5 (245 aa).

A compositionally biased stretch (basic residues) spans 34 to 47; sequence LPHRAAQRRKRVHR. Residues 34–77 are disordered; that stretch reads LPHRAAQRRKRVHRLHEDYETEENDEELQKKKRQNRDAQRAYRE. The 64-residue stretch at 58 to 121 folds into the bZIP domain; that stretch reads DEELQKKKRQ…QAKESENHAL (64 aa). The tract at residues 63-82 is basic motif; sequence KKKRQNRDAQRAYRERKNNK. Residues 68–77 show a composition bias toward basic and acidic residues; sequence NRDAQRAYRE. Residues 86-114 are leucine-zipper; it reads LEETIESLSKVVKNYETKLNRLQNELQAK.

It belongs to the bZIP family. YAP subfamily. Homodimer.

The protein localises to the cytoplasm. It localises to the nucleus. Its function is as follows. Transcription activator involved in the regulation of genes expressed in response to environmental changes and metabolic requirements. According to genome-wide promoter binding and gene expression studies it is a coregulator for the expression of ribosomal genes, while its own expression is induced by the cell cycle specific activator SBF (SWI4-SWI6). This chain is AP-1-like transcription factor YAP5 (YAP5), found in Saccharomyces cerevisiae (strain ATCC 204508 / S288c) (Baker's yeast).